The following is a 350-amino-acid chain: Galactokinase (350 aa).

14 to 17 (EHTD) is a binding site for substrate. ATP-binding positions include serine 46 and 96 to 102 (GAGLSSS). Residues serine 102 and glutamate 134 each coordinate Mg(2+). Residue aspartate 146 is the Proton acceptor of the active site. Tyrosine 196 serves as a coordination point for substrate.

This sequence belongs to the GHMP kinase family. GalK subfamily.

It localises to the cytoplasm. It catalyses the reaction alpha-D-galactose + ATP = alpha-D-galactose 1-phosphate + ADP + H(+). Its pathway is carbohydrate metabolism; galactose metabolism. In terms of biological role, catalyzes the transfer of the gamma-phosphate of ATP to D-galactose to form alpha-D-galactose-1-phosphate (Gal-1-P). The polypeptide is Galactokinase (Thermotoga neapolitana (strain ATCC 49049 / DSM 4359 / NBRC 107923 / NS-E)).